The following is a 361-amino-acid chain: 3,6-anhydro-alpha-L-galactonate cycloisomerase (361 aa).

Lysine 166 acts as the Proton acceptor in catalysis. Residues aspartate 195, glutamate 221, and glutamate 247 each contribute to the Mg(2+) site. Histidine 297 (proton donor/acceptor) is an active-site residue.

The protein belongs to the mandelate racemase/muconate lactonizing enzyme family. The cofactor is Mg(2+).

The enzyme catalyses 3,6-anhydro-L-galactonate = 2-dehydro-3-deoxy-L-galactonate. Its function is as follows. Involved in the degradation of 3,6-anhydro-L-galactose, which is the major monomeric sugar of red macroalgae. Catalyzes the isomerization of 3,6-anhydrogalactonate (AHGA) to 2-keto-3-deoxy-galactonate (KDGal). In Streptomyces coelicolor (strain ATCC BAA-471 / A3(2) / M145), this protein is 3,6-anhydro-alpha-L-galactonate cycloisomerase.